The sequence spans 53 residues: uncharacterized protein (53 aa).

This is an uncharacterized protein from Saccharomyces cerevisiae (strain ATCC 204508 / S288c) (Baker's yeast).